The primary structure comprises 606 residues: Granule-bound starch synthase 1, chloroplastic/amyloplastic (606 aa).

The N-terminal 76 residues, 1–76 (MSALTTSQLA…GSRRFPSVVV (76 aa)), are a transit peptide targeting the chloroplast. The interval 29–67 (RHGFQGLKPRSPAGGDASSLSVTTSARATPKQQRSVQRG) is disordered. Residues 46-66 (SSLSVTTSARATPKQQRSVQR) are compositionally biased toward polar residues. An ADP-alpha-D-glucose-binding site is contributed by lysine 97.

Belongs to the glycosyltransferase 1 family. Bacterial/plant glycogen synthase subfamily.

It localises to the plastid. The protein resides in the chloroplast. Its subcellular location is the amyloplast. It carries out the reaction an NDP-alpha-D-glucose + [(1-&gt;4)-alpha-D-glucosyl](n) = [(1-&gt;4)-alpha-D-glucosyl](n+1) + a ribonucleoside 5'-diphosphate + H(+). It functions in the pathway glycan biosynthesis; starch biosynthesis. Its function is as follows. Required for the synthesis of amylose in endosperm. The protein is Granule-bound starch synthase 1, chloroplastic/amyloplastic (WAXY) of Oryza sativa (Rice).